Here is a 154-residue protein sequence, read N- to C-terminus: 6,7-dimethyl-8-ribityllumazine synthase (154 aa).

5-amino-6-(D-ribitylamino)uracil is bound by residues Phe-15, 47 to 49 (TFD), and 71 to 73 (AVI). Position 76–77 (76–77 (ET)) interacts with (2S)-2-hydroxy-3-oxobutyl phosphate. His-79 functions as the Proton donor in the catalytic mechanism. 5-amino-6-(D-ribitylamino)uracil is bound at residue Leu-104. Arg-119 lines the (2S)-2-hydroxy-3-oxobutyl phosphate pocket.

The protein belongs to the DMRL synthase family.

The enzyme catalyses (2S)-2-hydroxy-3-oxobutyl phosphate + 5-amino-6-(D-ribitylamino)uracil = 6,7-dimethyl-8-(1-D-ribityl)lumazine + phosphate + 2 H2O + H(+). It participates in cofactor biosynthesis; riboflavin biosynthesis; riboflavin from 2-hydroxy-3-oxobutyl phosphate and 5-amino-6-(D-ribitylamino)uracil: step 1/2. Its function is as follows. Catalyzes the formation of 6,7-dimethyl-8-ribityllumazine by condensation of 5-amino-6-(D-ribitylamino)uracil with 3,4-dihydroxy-2-butanone 4-phosphate. This is the penultimate step in the biosynthesis of riboflavin. The protein is 6,7-dimethyl-8-ribityllumazine synthase of Saccharolobus islandicus (strain M.16.27) (Sulfolobus islandicus).